The primary structure comprises 1347 residues: Protocadherin-11 X-linked (1347 aa).

A signal peptide spans 1–23 (MDLLSGTYIFAVLLACVVFHSGA). Over 24 to 812 (QEKNYTIREE…VSSPTSDYVK (789 aa)) the chain is Extracellular. 7 Cadherin domains span residues 26–139 (KNYT…APLF), 140–249 (PATV…HPVF), 250–355 (KETE…VPSI), 362–466 (NPVN…APVF), 467–570 (TQSF…SPVF), 571–673 (THNE…KPVF), and 677–795 (PSNY…APVT). N-linked (GlcNAc...) asparagine glycans are attached at residues Asn-27, Asn-48, and Asn-54. An N-linked (GlcNAc...) asparagine glycan is attached at Asn-344. A glycan (N-linked (GlcNAc...) asparagine) is linked at Asn-553. Asn-773 is a glycosylation site (N-linked (GlcNAc...) asparagine). A helical transmembrane segment spans residues 813 to 833 (ILVAAVAGTITVVVVIFITAV). Residues 834-1347 (VRCRQAPHLK…DSPVMEEHPL (514 aa)) are Cytoplasmic-facing. Disordered stretches follow at residues 1057–1091 (LPEG…GYPQ), 1097–1116 (RATP…ESTF), and 1325–1347 (TFTP…EHPL).

It is found in the cell membrane. Potential calcium-dependent cell-adhesion protein. In Pan troglodytes (Chimpanzee), this protein is Protocadherin-11 X-linked (PCDH11X).